A 314-amino-acid polypeptide reads, in one-letter code: Dihydroorotate dehydrogenase B (NAD(+)), catalytic subunit (314 aa).

Substrate is bound by residues K55, 79 to 83, and N136; that span reads NAMGL. Residue 55–56 coordinates FMN; the sequence is KS. Residue N136 participates in FMN binding. The Nucleophile role is filled by C139. Residues K174 and I200 each coordinate FMN. 201–202 lines the substrate pocket; sequence NT. FMN-binding positions include G226, 252–253, and 274–275; these read GG and GS.

This sequence belongs to the dihydroorotate dehydrogenase family. Type 1 subfamily. As to quaternary structure, heterotetramer of 2 PyrK and 2 PyrD type B subunits. FMN is required as a cofactor.

The protein localises to the cytoplasm. It catalyses the reaction (S)-dihydroorotate + NAD(+) = orotate + NADH + H(+). It participates in pyrimidine metabolism; UMP biosynthesis via de novo pathway; orotate from (S)-dihydroorotate (NAD(+) route): step 1/1. Its function is as follows. Catalyzes the conversion of dihydroorotate to orotate with NAD(+) as electron acceptor. The sequence is that of Dihydroorotate dehydrogenase B (NAD(+)), catalytic subunit (pyrD) from Methanosarcina mazei (strain ATCC BAA-159 / DSM 3647 / Goe1 / Go1 / JCM 11833 / OCM 88) (Methanosarcina frisia).